The primary structure comprises 254 residues: N(G),N(G)-dimethylarginine dimethylaminohydrolase (254 aa).

Substrate-binding positions include Leu18, Asp60, 65-66 (ED), Arg85, and Arg132. Residue His162 is the Proton donor of the active site. Zn(2+) is bound at residue His162. Residue Ile243 participates in substrate binding. Position 249 (Cys249) interacts with Zn(2+). Catalysis depends on Cys249, which acts as the Nucleophile.

This sequence belongs to the DDAH family. In terms of assembly, homodimer.

The catalysed reaction is N(omega),N(omega)-dimethyl-L-arginine + H2O = dimethylamine + L-citrulline. The enzyme catalyses N(omega)-methyl-L-arginine + H2O = L-citrulline + methylamine. Its activity is regulated as follows. Inhibited by zinc ions. Competitively inhibited by lysine. Functionally, hydrolyzes N(G),N(G)-dimethyl-L-arginine (ADMA) and N(G)-monomethyl-L-arginine (MMA). This is N(G),N(G)-dimethylarginine dimethylaminohydrolase from Pseudomonas aeruginosa (strain ATCC 15692 / DSM 22644 / CIP 104116 / JCM 14847 / LMG 12228 / 1C / PRS 101 / PAO1).